The following is a 334-amino-acid chain: Glycerol-3-phosphate dehydrogenase [NAD(P)+] (334 aa).

3 residues coordinate NADPH: tryptophan 13, arginine 33, and lysine 106. Lysine 106, glycine 137, and serine 139 together coordinate sn-glycerol 3-phosphate. Alanine 141 is an NADPH binding site. Sn-glycerol 3-phosphate-binding residues include lysine 192, aspartate 245, serine 255, arginine 256, and asparagine 257. The active-site Proton acceptor is lysine 192. An NADPH-binding site is contributed by arginine 256. NADPH is bound by residues valine 280 and glutamate 282.

The protein belongs to the NAD-dependent glycerol-3-phosphate dehydrogenase family.

The protein resides in the cytoplasm. It catalyses the reaction sn-glycerol 3-phosphate + NAD(+) = dihydroxyacetone phosphate + NADH + H(+). It carries out the reaction sn-glycerol 3-phosphate + NADP(+) = dihydroxyacetone phosphate + NADPH + H(+). It functions in the pathway membrane lipid metabolism; glycerophospholipid metabolism. Its function is as follows. Catalyzes the reduction of the glycolytic intermediate dihydroxyacetone phosphate (DHAP) to sn-glycerol 3-phosphate (G3P), the key precursor for phospholipid synthesis. The sequence is that of Glycerol-3-phosphate dehydrogenase [NAD(P)+] from Chlamydia trachomatis serovar L2b (strain UCH-1/proctitis).